We begin with the raw amino-acid sequence, 167 residues long: Alpha-crystallin A chain (167 aa).

Residue M1 is modified to N-acetylmethionine. The region spanning 47-158 is the sHSP domain; it reads YYRQSFFRGF…GERPIPVSRE (112 aa). Zn(2+)-binding residues include H94, E96, H101, and H148. Residues 143–167 form a disordered region; the sequence is SLDSSHGERPIPVSREEKPTSAPSS. Residues 147-161 are compositionally biased toward basic and acidic residues; sequence SHGERPIPVSREEKP. S156 carries O-linked (GlcNAc) serine glycosylation.

Belongs to the small heat shock protein (HSP20) family. As to quaternary structure, heteropolymer composed of three CRYAA and one CRYAB subunits. Inter-subunit bridging via zinc ions enhances stability, which is crucial as there is no protein turn over in the lens. Can also form homodimers and homotetramers (dimers of dimers) which serve as the building blocks of homooligomers. Within homooligomers, the zinc-binding motif is created from residues of 3 different molecules. His-94 and Glu-96 from one molecule are ligands of the zinc ion, and His-101 and His-148 residues from additional molecules complete the site with tetrahedral coordination geometry.

The protein localises to the cytoplasm. It is found in the nucleus. Functionally, contributes to the transparency and refractive index of the lens. May act as a chaperone, preventing aggregation of various proteins under a wide range of stress conditions. The protein is Alpha-crystallin A chain (CRYAA) of Pelophylax lessonae (Pool frog).